The primary structure comprises 328 residues: Nucleotide-binding protein BLD_0430 (328 aa).

The disordered stretch occupies residues 1–35 (MNQQTTNRDTGEAAATNAPANSATSTSTPDNQPTP). Residues 13-29 (AAATNAPANSATSTSTP) show a composition bias toward low complexity. 46–53 (GMSGAGRS) contributes to the ATP binding site. 101-104 (DVRS) contacts GTP.

The protein belongs to the RapZ-like family.

In terms of biological role, displays ATPase and GTPase activities. The sequence is that of Nucleotide-binding protein BLD_0430 from Bifidobacterium longum (strain DJO10A).